A 455-amino-acid polypeptide reads, in one-letter code: Bifunctional protein GlmU (455 aa).

A pyrophosphorylase region spans residues 1 to 227 (MKLKAIILAA…YEEIMAVNSR (227 aa)). UDP-N-acetyl-alpha-D-glucosamine-binding positions include 8-11 (LAAG), Lys22, Gln72, and 77-78 (GT). Asp100 lines the Mg(2+) pocket. UDP-N-acetyl-alpha-D-glucosamine is bound by residues Gly137, Glu152, Asn167, and Asn225. Asn225 contacts Mg(2+). The segment at 228-248 (EQLADVEAIMRRRIAKKHMAN) is linker. The segment at 249–455 (GVTIMNPEHV…WTKRKGLLKK (207 aa)) is N-acetyltransferase. Positions 330 and 348 each coordinate UDP-N-acetyl-alpha-D-glucosamine. The Proton acceptor role is filled by His360. UDP-N-acetyl-alpha-D-glucosamine-binding residues include Tyr363 and Asn374. Residues 383–384 (NY), Ser402, Cys420, and Arg437 each bind acetyl-CoA.

In the N-terminal section; belongs to the N-acetylglucosamine-1-phosphate uridyltransferase family. The protein in the C-terminal section; belongs to the transferase hexapeptide repeat family. In terms of assembly, homotrimer. It depends on Mg(2+) as a cofactor.

It localises to the cytoplasm. It catalyses the reaction alpha-D-glucosamine 1-phosphate + acetyl-CoA = N-acetyl-alpha-D-glucosamine 1-phosphate + CoA + H(+). It carries out the reaction N-acetyl-alpha-D-glucosamine 1-phosphate + UTP + H(+) = UDP-N-acetyl-alpha-D-glucosamine + diphosphate. It participates in nucleotide-sugar biosynthesis; UDP-N-acetyl-alpha-D-glucosamine biosynthesis; N-acetyl-alpha-D-glucosamine 1-phosphate from alpha-D-glucosamine 6-phosphate (route II): step 2/2. The protein operates within nucleotide-sugar biosynthesis; UDP-N-acetyl-alpha-D-glucosamine biosynthesis; UDP-N-acetyl-alpha-D-glucosamine from N-acetyl-alpha-D-glucosamine 1-phosphate: step 1/1. It functions in the pathway bacterial outer membrane biogenesis; LPS lipid A biosynthesis. In terms of biological role, catalyzes the last two sequential reactions in the de novo biosynthetic pathway for UDP-N-acetylglucosamine (UDP-GlcNAc). The C-terminal domain catalyzes the transfer of acetyl group from acetyl coenzyme A to glucosamine-1-phosphate (GlcN-1-P) to produce N-acetylglucosamine-1-phosphate (GlcNAc-1-P), which is converted into UDP-GlcNAc by the transfer of uridine 5-monophosphate (from uridine 5-triphosphate), a reaction catalyzed by the N-terminal domain. The chain is Bifunctional protein GlmU from Alkaliphilus oremlandii (strain OhILAs) (Clostridium oremlandii (strain OhILAs)).